Reading from the N-terminus, the 136-residue chain is ATP synthase epsilon chain, plastid (136 aa).

The protein belongs to the ATPase epsilon chain family. In terms of assembly, F-type ATPases have 2 components, CF(1) - the catalytic core - and CF(0) - the membrane proton channel. CF(1) has five subunits: alpha(3), beta(3), gamma(1), delta(1), epsilon(1). CF(0) has three main subunits: a, b and c.

It is found in the plastid thylakoid membrane. Functionally, produces ATP from ADP in the presence of a proton gradient across the membrane. The chain is ATP synthase epsilon chain, plastid from Cuscuta reflexa (Southern Asian dodder).